Consider the following 508-residue polypeptide: Flagellin (508 aa).

The protein belongs to the bacterial flagellin family.

Its subcellular location is the secreted. It localises to the bacterial flagellum. Its function is as follows. Flagellin is the subunit protein which polymerizes to form the filaments of bacterial flagella. The polypeptide is Flagellin (fliC) (Salmonella berta).